A 255-amino-acid polypeptide reads, in one-letter code: uncharacterized protein (255 aa).

Transmembrane regions (helical) follow at residues L2–L22 and V168–F188.

Its subcellular location is the cell membrane. This is an uncharacterized protein from Mycobacterium tuberculosis (strain ATCC 25618 / H37Rv).